The primary structure comprises 106 residues: ATP-dependent Clp protease adapter protein ClpS (106 aa).

Belongs to the ClpS family. Binds to the N-terminal domain of the chaperone ClpA.

Its function is as follows. Involved in the modulation of the specificity of the ClpAP-mediated ATP-dependent protein degradation. The sequence is that of ATP-dependent Clp protease adapter protein ClpS from Citrobacter koseri (strain ATCC BAA-895 / CDC 4225-83 / SGSC4696).